The chain runs to 331 residues: UBX domain-containing protein 2B (331 aa).

Disordered regions lie at residues 1-26 and 38-63; these read MAEGGGAEPEEQERRSSRPRPPSARD and EMKCKSSKPDRSTATAFKSPRTPPLR. Position 2 is an N-acetylalanine (Ala2). The segment covering 38–48 has biased composition (basic and acidic residues); the sequence is EMKCKSSKPDR. Phosphoserine is present on Ser56. The residue at position 59 (Thr59) is a Phosphothreonine. Ser66 is modified (phosphoserine). The region spanning 141–206 is the SEP domain; the sequence is DVQILLRLWS…MEDHQDQEYI (66 aa). Phosphoserine is present on residues Ser231, Ser234, and Ser235. The 78-residue stretch at 252–329 folds into the UBX domain; the sequence is DSVPTTKIQI…DILNTVILQQ (78 aa).

This sequence belongs to the NSFL1C family. Interacts with VCP. Does not bind ubiquitin. Present at high level in brain. Also present in liver, kidney, spleen, testis, lung and heart (at protein level).

It is found in the nucleus. It localises to the cytoplasm. The protein resides in the cytosol. The protein localises to the endoplasmic reticulum. Its subcellular location is the golgi apparatus. It is found in the cytoskeleton. It localises to the microtubule organizing center. The protein resides in the centrosome. Functionally, adapter protein required for Golgi and endoplasmic reticulum biogenesis. Involved in Golgi and endoplasmic reticulum maintenance during interphase and in their reassembly at the end of mitosis. The complex formed with VCP has membrane fusion activity; membrane fusion activity requires USO1-GOLGA2 tethering and BET1L. VCPIP1 is also required, but not its deubiquitinating activity. Together with NSFL1C/p47, regulates the centrosomal levels of kinase AURKA/Aurora A during mitotic progression by promoting AURKA removal from centrosomes in prophase. Also, regulates spindle orientation during mitosis. This is UBX domain-containing protein 2B (Ubxn2b) from Rattus norvegicus (Rat).